The primary structure comprises 96 residues: Co-chaperonin GroES (96 aa).

This sequence belongs to the GroES chaperonin family. As to quaternary structure, heptamer of 7 subunits arranged in a ring. Interacts with the chaperonin GroEL.

The protein localises to the cytoplasm. Functionally, together with the chaperonin GroEL, plays an essential role in assisting protein folding. The GroEL-GroES system forms a nano-cage that allows encapsulation of the non-native substrate proteins and provides a physical environment optimized to promote and accelerate protein folding. GroES binds to the apical surface of the GroEL ring, thereby capping the opening of the GroEL channel. This chain is Co-chaperonin GroES, found in Chromohalobacter salexigens (strain ATCC BAA-138 / DSM 3043 / CIP 106854 / NCIMB 13768 / 1H11).